We begin with the raw amino-acid sequence, 175 residues long: Bifunctional protein PyrR (175 aa).

Substrate-binding positions include T40 to R41, D102 to T110, R135, and V159. The PRPP-binding signature appears at V98–T110.

Belongs to the purine/pyrimidine phosphoribosyltransferase family. PyrR subfamily. In terms of assembly, homodimer and homohexamer; in equilibrium.

The catalysed reaction is UMP + diphosphate = 5-phospho-alpha-D-ribose 1-diphosphate + uracil. Regulates transcriptional attenuation of the pyrimidine nucleotide (pyr) operon by binding in a uridine-dependent manner to specific sites on pyr mRNA. This disrupts an antiterminator hairpin in the RNA and favors formation of a downstream transcription terminator, leading to a reduced expression of downstream genes. Functionally, also displays a weak uracil phosphoribosyltransferase activity which is not physiologically significant. This is Bifunctional protein PyrR from Staphylococcus epidermidis (strain ATCC 12228 / FDA PCI 1200).